A 926-amino-acid chain; its full sequence is Probable zinc protease PqqL (926 aa).

His79 is a Zn(2+) binding site. The active-site Proton acceptor is Glu82. The Zn(2+) site is built by His83 and Glu159.

It belongs to the peptidase M16 family. Zn(2+) is required as a cofactor.

This Haemophilus influenzae (strain ATCC 51907 / DSM 11121 / KW20 / Rd) protein is Probable zinc protease PqqL (pqqL).